The sequence spans 179 residues: Disulfide bond formation protein B (179 aa).

Residues 1–14 (MLSYFKELSLNRTA) are Cytoplasmic-facing. Residues 15–31 (WLLLAFVAFALEASAIY) traverse the membrane as a helical segment. Residues 32-49 (FQYGMGLVPCVMCVYERL) are Periplasmic-facing. Cysteine 41 and cysteine 44 are joined by a disulfide. Residues 50-65 (AIFGLLIAGLVGAISP) traverse the membrane as a helical segment. The Cytoplasmic segment spans residues 66-72 (RFFLTRW). The chain crosses the membrane as a helical span at residues 73–90 (LALLLWGFSAFKGLALAI). The Periplasmic segment spans residues 91-146 (KHHDYQANPSPWNQCEFKPEFPQTMPFDQWFPSIFAPGPVNCSEKQWEMFGLGMPE). The cysteines at positions 105 and 132 are disulfide-linked. A helical transmembrane segment spans residues 147–165 (WLILAFSIFALMFVIVLLS). Topologically, residues 166–179 (QFKRAKPQYRSVFR) are cytoplasmic.

The protein belongs to the DsbB family.

The protein resides in the cell inner membrane. In terms of biological role, required for disulfide bond formation in some periplasmic proteins. Acts by oxidizing the DsbA protein. The protein is Disulfide bond formation protein B of Actinobacillus pleuropneumoniae serotype 5b (strain L20).